Here is a 498-residue protein sequence, read N- to C-terminus: MSPQTETKASVGFKAGVKDYKLTYYTPDYETKDTDILAAFRVTPQPGVPPEEAGAAVAAESSTGTWTTVWTDGLTSLDRYKGRCYRIERVIGEKDQYIAYVAYPLDLFEEGSVTNLFTSIVGNVFGFKALRALRLEDLRIPPAYTKTFQGPPHGIQVERDKLNKYGRPLLGCTIKPKLGLSAKNYGRAVYECLRGGLDFTKDDENVNSQPFMRWRDRFLFCAEAIYKSQAETGEIKGHYLNATAGTCEEMLKRALFARELGVPIIMHDYLTGGFTANTSLAHYCRENGLLLHIHRAMHAVIDRQKNHGIHFRVLAKALRLSGGDHIHSGTVVGKLEGEREITLGFVDLLRDDFVEQDRSRGIYFPQDWVSLPGVMPVASGGIHVWHMPALTEIFGDDSVLQFGGGTLGHPWGNAPGAVANRVALEACVQARNEGRDLAQEGNDILRQAGKWSPELAAACEVWKEIRFDFKPVDTLDPNDKKQRDNEDTLADKLFGDKG.

Positions 1–2 are excised as a propeptide; that stretch reads MS. P3 bears the N-acetylproline mark. The residue at position 14 (K14) is an N6,N6,N6-trimethyllysine. 2 residues coordinate substrate: N123 and T173. K175 acts as the Proton acceptor in catalysis. K177 provides a ligand contact to substrate. K201, D203, and E204 together coordinate Mg(2+). K201 bears the N6-carboxylysine mark. The active-site Proton acceptor is H294. The substrate site is built by R295, H327, and S379. Positions 471 to 498 are disordered; the sequence is PVDTLDPNDKKQRDNEDTLADKLFGDKG.

It belongs to the RuBisCO large chain family. Type I subfamily. Heterohexadecamer of 8 large chains and 8 small chains; disulfide-linked. The disulfide link is formed within the large subunit homodimers. It depends on Mg(2+) as a cofactor. The disulfide bond which can form in the large chain dimeric partners within the hexadecamer appears to be associated with oxidative stress and protein turnover.

It localises to the plastid. The enzyme catalyses 2 (2R)-3-phosphoglycerate + 2 H(+) = D-ribulose 1,5-bisphosphate + CO2 + H2O. It carries out the reaction D-ribulose 1,5-bisphosphate + O2 = 2-phosphoglycolate + (2R)-3-phosphoglycerate + 2 H(+). Its function is as follows. RuBisCO catalyzes two reactions: the carboxylation of D-ribulose 1,5-bisphosphate, the primary event in carbon dioxide fixation, as well as the oxidative fragmentation of the pentose substrate in the photorespiration process. Both reactions occur simultaneously and in competition at the same active site. This chain is Ribulose bisphosphate carboxylase large chain (rbcL), found in Cuscuta reflexa (Southern Asian dodder).